Reading from the N-terminus, the 444-residue chain is ATP-dependent protease ATPase subunit HslU (444 aa).

ATP-binding positions include Ile18 and 60-65; that span reads GVGKTE. The tract at residues 143-163 is disordered; the sequence is WGEVESHDSHSSTRQAFRKKL. ATP-binding residues include Asp257, Glu322, and Arg394.

This sequence belongs to the ClpX chaperone family. HslU subfamily. In terms of assembly, a double ring-shaped homohexamer of HslV is capped on each side by a ring-shaped HslU homohexamer. The assembly of the HslU/HslV complex is dependent on binding of ATP.

It localises to the cytoplasm. ATPase subunit of a proteasome-like degradation complex; this subunit has chaperone activity. The binding of ATP and its subsequent hydrolysis by HslU are essential for unfolding of protein substrates subsequently hydrolyzed by HslV. HslU recognizes the N-terminal part of its protein substrates and unfolds these before they are guided to HslV for hydrolysis. In Haemophilus influenzae (strain PittEE), this protein is ATP-dependent protease ATPase subunit HslU.